The following is a 687-amino-acid chain: Pre-mRNA-splicing factor CLF1 (687 aa).

HAT repeat units lie at residues 45-77, 79-111, 113-145, 147-178, 180-211, 213-247, 251-283, 300-332, 337-369, 383-416, 451-483, 525-557, and 629-661; these read EYQRRKRTEYEGYLKRNRLDMGQWIRYAQFEIE, HDMRRARSIFERALLVDSSFIPLWIRYIDAELK, KCINHARNLMNRAISTLPRVDKLWYKYLIVEES, NNVEIVRSLYTKWCSLEPGVNAWNSFVDFEIR, KNWNGVREIYSKYVMAHPQMQTWLKWVRFENR, GNTEFTRSVYSLAIDTVANLQNLQIWSDMEVAKLV, AHWEAAQQEYERSSALYQIAIEKWPSNQLLKAG, TISYKRKMEYETILSNNAYDYDTWWLYLDLISE, QIMQTFEKAIVDSRPKELSKNVQWKRYIYLWMR, LEEELFQRLIDDIIPHKHFTFSKIWLMYAKFLIR, KEFDRVRKIYEKFIEFQPSDLQIWSQYGELEEN, QEFEKARKLYRRYLELNQYSPQSWIEFAMYQTS, and LDQETVKKRFPKVIKKVRLQNGVEEEFVDYIFP.

Belongs to the crooked-neck family. Belongs to the NTC complex (or PRP19-associated complex), composed of at least CEF1, CLF1, ISY1, NTC20, SNT309, SYF1, SYF2, and PRP19. The NTC complex associates with the spliceosome after the release of the U1 and U4 snRNAs and forms the CWC spliceosome subcomplex (or CEF1-associated complex) reminiscent of a late-stage spliceosome composed also of the U2, U5 and U6 snRNAs and at least BUD13, BUD31, BRR2, CDC40, CUS1, CWC2, CWC15, CWC21, CWC22, CWC23, CWC24, CWC25, CWC27, ECM2, HSH155, IST3, LEA1, MSL1, PRP8, PRP9, PRP11, PRP21, PRP22, PRP45, PRP46, SLU7, SMB1, SMD1, SMD2, SMD3, SMX2, SMX3, SNU114, SPP2, RSE1 and YJU2. Interacts with CEF1, ISY1, MUD2, NTC20, PRP22, PRP40, PRP46, SYF1, SYF2, and the ORC2 subunit of the origin recognition complex.

Its subcellular location is the nucleus. Functionally, involved in pre-mRNA splicing and cell cycle progression. Required for the spliceosome assembly by promoting the functional integration of the U4/U6.U5 tri-snRNP particle into the U1-, U2-dependent pre-spliceosome. Also recruits PRP19 to the spliceosome, as a component of the NTC complex (or PRP19-associated complex). The association of the NTC complex to the spliceosome mediates conformational rearrangement or stabilizes the structure of the spliceosome after U4 snRNA dissociation, which leads to spliceosome maturation. Required for initiation of the DNA replication by binding the RNA replication origins, probably through its interaction with the origin recognition complex (ORC). The sequence is that of Pre-mRNA-splicing factor CLF1 (CLF1) from Saccharomyces cerevisiae (strain ATCC 204508 / S288c) (Baker's yeast).